The chain runs to 249 residues: Triosephosphate isomerase (249 aa).

Substrate-binding residues include N12 and K14. The residue at position 14 (K14) is an N6-acetyllysine. A 3'-nitrotyrosine modification is found at Y68. The residue at position 80 (S80) is a Phosphoserine. H96 serves as the catalytic Electrophile. S106 carries the phosphoserine modification. A Glycyl lysine isopeptide (Lys-Gly) (interchain with G-Cter in SUMO1) cross-link involves residue K142. K149 bears the N6-succinyllysine mark. K156 carries the N6-acetyllysine; alternate modification. At K156 the chain carries N6-succinyllysine; alternate. The residue at position 159 (S159) is a Phosphoserine. Residue E166 is the Proton acceptor of the active site. T173 carries the post-translational modification Phosphothreonine. K194 is subject to N6-acetyllysine; alternate. K194 is subject to N6-succinyllysine; alternate. An N6-methyllysine; alternate modification is found at K194. Residue S198 is modified to Phosphoserine. A 3'-nitrotyrosine modification is found at Y209. The residue at position 212 (S212) is a Phosphoserine. Phosphothreonine is present on T214. S223 is modified (phosphoserine). K238 is subject to N6-acetyllysine.

The protein belongs to the triosephosphate isomerase family. As to quaternary structure, homodimer.

It localises to the cytoplasm. The catalysed reaction is dihydroxyacetone phosphate = methylglyoxal + phosphate. It carries out the reaction D-glyceraldehyde 3-phosphate = dihydroxyacetone phosphate. The protein operates within carbohydrate degradation; glycolysis; D-glyceraldehyde 3-phosphate from glycerone phosphate: step 1/1. It participates in carbohydrate biosynthesis; gluconeogenesis. Functionally, triosephosphate isomerase is an extremely efficient metabolic enzyme that catalyzes the interconversion between dihydroxyacetone phosphate (DHAP) and D-glyceraldehyde-3-phosphate (G3P) in glycolysis and gluconeogenesis. Its function is as follows. It is also responsible for the non-negligible production of methylglyoxal a reactive cytotoxic side-product that modifies and can alter proteins, DNA and lipids. In Pongo abelii (Sumatran orangutan), this protein is Triosephosphate isomerase (TPI1).